Consider the following 373-residue polypeptide: MARNVSSWSSLSCLPDEMVLNCLARVPRRYYENISCVSVRLRSLVRTPELYRMRSLLHKDSIYVCFCDRENYSTDATYLWFTLRPTTATMEYQLVPLSFPSHNFMFRASTVAVDSEIYFVGGRPNPTELWILDTRSGKLRQGPIKPEFLRIASSSAVGVFDGKIHVIQDLKQDETEEQVYDLETQTWKVVGVPVPDEKADSRPNMVSSVSLEGKVYAKDFGSISVYNLRQGTRKEKLELPIDDRWVSCMCVANNVLFAFFTKYGLLWLDTKLNNVWRVVTGDVQTLHRKLYGSAMAEYYGKLAIFWRERYISTSINTTKNNNNNNKKKEEKIWSALIALNRVGDGICGTIEWSGVVATIPYICQFLHCLVASD.

The 47-residue stretch at 8–54 (WSSLSCLPDEMVLNCLARVPRRYYENISCVSVRLRSLVRTPELYRMR) folds into the F-box domain. Kelch repeat units lie at residues 116 to 162 (EIYF…VFDG) and 163 to 208 (KIHV…MVSS).

In Arabidopsis thaliana (Mouse-ear cress), this protein is Putative F-box/kelch-repeat protein At2g41360.